The chain runs to 170 residues: Translationally-controlled tumor protein homolog (170 aa).

The 170-residue stretch at 1 to 170 folds into the TCTP domain; the sequence is MIIYKCIISG…FKDGLLAEKC (170 aa).

It belongs to the TCTP family.

The protein localises to the cytoplasm. Involved in calcium binding and microtubule stabilization. The protein is Translationally-controlled tumor protein homolog (tpt1) of Lateolabrax japonicus (Japanese sea perch).